Here is a 941-residue protein sequence, read N- to C-terminus: Cell wall protein IFF9 (941 aa).

The signal sequence occupies residues Met-1–Ala-20. Residue Asn-917 is the site of GPI-anchor amidated asparagine attachment. A propeptide spans Gly-918–Met-941 (removed in mature form).

The protein belongs to the HYR1/IFF family. In terms of processing, the GPI-anchor is attached to the protein in the endoplasmic reticulum and serves to target the protein to the cell surface. There, the glucosamine-inositol phospholipid moiety is cleaved off and the GPI-modified mannoprotein is covalently attached via its lipidless GPI glycan remnant to the 1,6-beta-glucan of the outer cell wall layer.

The protein localises to the secreted. Its subcellular location is the cell wall. The protein resides in the membrane. GPI-anchored cell wall protein involved in cell wall organization, hyphal growth, as well as in host-fungal interaction and virulence. This is Cell wall protein IFF9 (IFF9) from Candida albicans (strain SC5314 / ATCC MYA-2876) (Yeast).